A 343-amino-acid chain; its full sequence is Ribosomal RNA small subunit methyltransferase C (343 aa).

It belongs to the methyltransferase superfamily. RsmC family. In terms of assembly, monomer.

Its subcellular location is the cytoplasm. The catalysed reaction is guanosine(1207) in 16S rRNA + S-adenosyl-L-methionine = N(2)-methylguanosine(1207) in 16S rRNA + S-adenosyl-L-homocysteine + H(+). Specifically methylates the guanine in position 1207 of 16S rRNA in the 30S particle. The sequence is that of Ribosomal RNA small subunit methyltransferase C from Escherichia coli O7:K1 (strain IAI39 / ExPEC).